The primary structure comprises 76 residues: KANTR integral membrane protein (76 aa).

Residues 1-25 form the signal peptide; sequence MSPFSLLILVICAFSLFFLINLTRG. Residues 26 to 34 lie on the Extracellular side of the membrane; sequence LSILLVFSK. The chain crosses the membrane as a helical span at residues 35 to 55; that stretch reads NQLLALLLLSIVSLFSISLIS. Over 56–76 the chain is Cytoplasmic; the sequence is ALIFFDLLPSTFFGFILLFFF.

It is found in the membrane. The sequence is that of KANTR integral membrane protein from Homo sapiens (Human).